A 225-amino-acid polypeptide reads, in one-letter code: KDP operon transcriptional regulatory protein KdpE (225 aa).

In terms of domain architecture, Response regulatory spans 3–116 (NVLIVEDEQA…ELQARLRVAL (114 aa)). The residue at position 52 (aspartate 52) is a 4-aspartylphosphate. The ompR/PhoB-type DNA-binding region spans 126–225 (DPLVKFSDVT…ETGIGYRFML (100 aa)).

In terms of processing, phosphorylated by KdpD.

It is found in the cytoplasm. Functionally, member of the two-component regulatory system KdpD/KdpE involved in the regulation of the kdp operon. The protein is KDP operon transcriptional regulatory protein KdpE (kdpE) of Escherichia coli (strain K12).